A 380-amino-acid polypeptide reads, in one-letter code: D-threo-3-hydroxyaspartate dehydratase (380 aa).

Lys-43 bears the N6-(pyridoxal phosphate)lysine mark.

The protein belongs to the DSD1 family. In terms of assembly, monomer. Pyridoxal 5'-phosphate is required as a cofactor. It depends on Mn(2+) as a cofactor. Requires Co(2+) as cofactor. The cofactor is Ni(2+).

The catalysed reaction is (3R)-3-hydroxy-D-aspartate = oxaloacetate + NH4(+). Its activity is regulated as follows. Strongly inhibited by hydroxylamine. Modestly inhibited by EDTA. Functionally, catalyzes the deamination of D-threo-3-hydroxyaspartate (D-THA). Also exhibits dehydratase activity towards L-threo-3-hydroxyaspartate (L-THA), L-erythro-3-hydroxyaspartate (L-EHA) and D-serine. The chain is D-threo-3-hydroxyaspartate dehydratase (dthadh) from Delftia sp. (strain HT23).